A 456-amino-acid chain; its full sequence is Short chain dehydrogenase tazN (456 aa).

Valine 45, aspartate 99, asparagine 126, arginine 160, tyrosine 195, lysine 199, and threonine 229 together coordinate NADP(+). Tyrosine 195 serves as the catalytic Proton donor. Catalysis depends on lysine 199, which acts as the Lowers pKa of active site Tyr.

Belongs to the short-chain dehydrogenases/reductases (SDR) family.

It functions in the pathway secondary metabolite biosynthesis. In terms of biological role, short chain dehydrogenase; part of the gene cluster that mediates the biosynthesis of azaterrilone A and other azaphilones, a class of fungal metabolites characterized by a highly oxygenated pyrano-quinone bicyclic core and exhibiting a broad range of bioactivities. The first step of the pathway begins with the non-reducing polyketide synthase tazA that assembles one acetyl-CoA starter unit, five malonyl-CoA units, and catalyzes a series of Claisen condensations, methylation, PT-mediated cyclization, and finally releases the first hexaketide precursor through the R-domain. The tazA product then undergoes reduction on its terminal ketone and the following pyran-ring formation by yet undetermined enzyme(s). Dehydration and enoyl reduction, possibly involving the trans-enoyl reductase tazE leads to the next intermediate. TazD is predicted as an acetyltransferase and might catalyze the acetylation steps leading to the synthesis of azaterrilone A. Azaterrilone A is not the final product of the taz pathway and both the highly reducing polyketide synthase tazB and the dual enzyme tazHJ catalyze late steps of the pathway, leading to the production of the 2 final stereoisomers that contain additional polyketide modification whose structures have still to be determined. The sequence is that of Short chain dehydrogenase tazN from Aspergillus terreus (strain NIH 2624 / FGSC A1156).